A 524-amino-acid polypeptide reads, in one-letter code: Probable beta-1,4-xylosyltransferase IRX14 (524 aa).

Over 1-51 (MMKSLLPQSQLRRSAAAASAARSSGGGAGSGGADGAGSDGGAGGRAPATST) the chain is Cytoplasmic. Residues 21–41 (ARSSGGGAGSGGADGAGSDGG) form a disordered region. Residues 24–41 (SGGGAGSGGADGAGSDGG) are compositionally biased toward gly residues. Residues 52 to 71 (FWFLLHALCCLVSLFLGFRF) form a helical; Signal-anchor for type II membrane protein membrane-spanning segment. Residues 72-524 (SRLLFFLLFS…SRSTTKRKEN (453 aa)) are Lumenal-facing. 4 N-linked (GlcNAc...) asparagine glycosylation sites follow: N132, N135, N240, and N353. Residues 492 to 524 (AELVDSKQDQEGRRLSRTDRSSRSRSTTKRKEN) are disordered. Residues 495-513 (VDSKQDQEGRRLSRTDRSS) show a composition bias toward basic and acidic residues.

It belongs to the glycosyltransferase 43 family.

It localises to the golgi apparatus membrane. Functionally, probable beta-1,4-xylosyltransferase involved in xylan biosynthesis in cell walls. In Oryza sativa subsp. japonica (Rice), this protein is Probable beta-1,4-xylosyltransferase IRX14.